We begin with the raw amino-acid sequence, 187 residues long: Elongation factor P (187 aa).

Belongs to the elongation factor P family.

It localises to the cytoplasm. It participates in protein biosynthesis; polypeptide chain elongation. Involved in peptide bond synthesis. Stimulates efficient translation and peptide-bond synthesis on native or reconstituted 70S ribosomes in vitro. Probably functions indirectly by altering the affinity of the ribosome for aminoacyl-tRNA, thus increasing their reactivity as acceptors for peptidyl transferase. In Corynebacterium jeikeium (strain K411), this protein is Elongation factor P.